Here is a 311-residue protein sequence, read N- to C-terminus: Olfactory receptor 10J4 (311 aa).

Topologically, residues methionine 1 to phenylalanine 29 are extracellular. Residues valine 30–isoleucine 50 form a helical membrane-spanning segment. Residues arginine 51 to histidine 57 are Cytoplasmic-facing. The helical transmembrane segment at threonine 58–isoleucine 78 threads the bilayer. At asparagine 79 to cysteine 98 the chain is on the extracellular side. A disulfide bridge links cysteine 98 with cysteine 180. Residues alanine 99 to methionine 119 form a helical membrane-spanning segment. The Cytoplasmic segment spans residues glycine 120–serine 149. A helical membrane pass occupies residues tryptophan 150–cysteine 170. Topologically, residues aspartate 171–leucine 202 are extracellular. The helical transmembrane segment at isoleucine 203–valine 223 threads the bilayer. The Cytoplasmic segment spans residues threonine 224–lysine 237. A helical transmembrane segment spans residues alanine 238 to glycine 254. Over arginine 255–arginine 272 the chain is Extracellular. A helical transmembrane segment spans residues leucine 273 to leucine 292. The Cytoplasmic portion of the chain corresponds to arginine 293–serine 311.

This sequence belongs to the G-protein coupled receptor 1 family.

The protein localises to the cell membrane. In terms of biological role, odorant receptor. The protein is Olfactory receptor 10J4 (OR10J4) of Homo sapiens (Human).